We begin with the raw amino-acid sequence, 259 residues long: Small ribosomal subunit protein uS2 (259 aa).

The protein belongs to the universal ribosomal protein uS2 family.

In Streptococcus pneumoniae (strain 70585), this protein is Small ribosomal subunit protein uS2.